The sequence spans 474 residues: Glutamate--tRNA ligase 1 (474 aa).

The short motif at 11–21 (PSPTGYLHIGG) is the 'HIGH' region element. The short motif at 240–244 (KLSKR) is the 'KMSKS' region element. Lys-243 serves as a coordination point for ATP.

It belongs to the class-I aminoacyl-tRNA synthetase family. Glutamate--tRNA ligase type 1 subfamily. In terms of assembly, monomer.

It localises to the cytoplasm. It catalyses the reaction tRNA(Glu) + L-glutamate + ATP = L-glutamyl-tRNA(Glu) + AMP + diphosphate. Catalyzes the attachment of glutamate to tRNA(Glu) in a two-step reaction: glutamate is first activated by ATP to form Glu-AMP and then transferred to the acceptor end of tRNA(Glu). This chain is Glutamate--tRNA ligase 1, found in Mesorhizobium japonicum (strain LMG 29417 / CECT 9101 / MAFF 303099) (Mesorhizobium loti (strain MAFF 303099)).